Consider the following 128-residue polypeptide: Large ribosomal subunit protein bL12 (128 aa).

This sequence belongs to the bacterial ribosomal protein bL12 family. Homodimer. Part of the ribosomal stalk of the 50S ribosomal subunit. Forms a multimeric L10(L12)X complex, where L10 forms an elongated spine to which 2 to 4 L12 dimers bind in a sequential fashion. Binds GTP-bound translation factors.

In terms of biological role, forms part of the ribosomal stalk which helps the ribosome interact with GTP-bound translation factors. Is thus essential for accurate translation. The chain is Large ribosomal subunit protein bL12 from Brachyspira hyodysenteriae (strain ATCC 49526 / WA1).